A 308-amino-acid chain; its full sequence is tRNA dimethylallyltransferase (308 aa).

9–16 (GPTAVGKT) is a binding site for ATP. 11 to 16 (TAVGKT) lines the substrate pocket. Residues 34-37 (DSMQ) form an interaction with substrate tRNA region.

This sequence belongs to the IPP transferase family. As to quaternary structure, monomer. Requires Mg(2+) as cofactor.

It catalyses the reaction adenosine(37) in tRNA + dimethylallyl diphosphate = N(6)-dimethylallyladenosine(37) in tRNA + diphosphate. In terms of biological role, catalyzes the transfer of a dimethylallyl group onto the adenine at position 37 in tRNAs that read codons beginning with uridine, leading to the formation of N6-(dimethylallyl)adenosine (i(6)A). This is tRNA dimethylallyltransferase from Lactobacillus delbrueckii subsp. bulgaricus (strain ATCC BAA-365 / Lb-18).